Reading from the N-terminus, the 256-residue chain is Imidazole glycerol phosphate synthase subunit HisF (256 aa).

Active-site residues include Asp12 and Asp131.

This sequence belongs to the HisA/HisF family. Heterodimer of HisH and HisF.

The protein localises to the cytoplasm. It catalyses the reaction 5-[(5-phospho-1-deoxy-D-ribulos-1-ylimino)methylamino]-1-(5-phospho-beta-D-ribosyl)imidazole-4-carboxamide + L-glutamine = D-erythro-1-(imidazol-4-yl)glycerol 3-phosphate + 5-amino-1-(5-phospho-beta-D-ribosyl)imidazole-4-carboxamide + L-glutamate + H(+). It functions in the pathway amino-acid biosynthesis; L-histidine biosynthesis; L-histidine from 5-phospho-alpha-D-ribose 1-diphosphate: step 5/9. IGPS catalyzes the conversion of PRFAR and glutamine to IGP, AICAR and glutamate. The HisF subunit catalyzes the cyclization activity that produces IGP and AICAR from PRFAR using the ammonia provided by the HisH subunit. This is Imidazole glycerol phosphate synthase subunit HisF from Beutenbergia cavernae (strain ATCC BAA-8 / DSM 12333 / CCUG 43141 / JCM 11478 / NBRC 16432 / NCIMB 13614 / HKI 0122).